The sequence spans 72 residues: Translation initiation factor IF-1 (72 aa).

Positions 1 to 72 (MSKEDVIELE…TRGRIVWRSK (72 aa)) constitute an S1-like domain.

It belongs to the IF-1 family. In terms of assembly, component of the 30S ribosomal translation pre-initiation complex which assembles on the 30S ribosome in the order IF-2 and IF-3, IF-1 and N-formylmethionyl-tRNA(fMet); mRNA recruitment can occur at any time during PIC assembly.

Its subcellular location is the cytoplasm. Functionally, one of the essential components for the initiation of protein synthesis. Stabilizes the binding of IF-2 and IF-3 on the 30S subunit to which N-formylmethionyl-tRNA(fMet) subsequently binds. Helps modulate mRNA selection, yielding the 30S pre-initiation complex (PIC). Upon addition of the 50S ribosomal subunit IF-1, IF-2 and IF-3 are released leaving the mature 70S translation initiation complex. The chain is Translation initiation factor IF-1 from Caldicellulosiruptor saccharolyticus (strain ATCC 43494 / DSM 8903 / Tp8T 6331).